An 869-amino-acid chain; its full sequence is Probable beta-glucosidase F (869 aa).

The signal sequence occupies residues 1–19; it reads MRVLSAIALVASLVPSALS. N-linked (GlcNAc...) asparagine glycosylation is found at N69, N77, and N261. D289 is a catalytic residue. N332, N364, N399, N425, and N478 each carry an N-linked (GlcNAc...) asparagine glycan. The tract at residues 678-698 is disordered; that stretch reads AYPPTRPPKGPTPTYPTTIPN. Residues 681 to 691 show a composition bias toward pro residues; it reads PTRPPKGPTPT. Residue N728 is glycosylated (N-linked (GlcNAc...) asparagine).

This sequence belongs to the glycosyl hydrolase 3 family.

The protein resides in the secreted. It carries out the reaction Hydrolysis of terminal, non-reducing beta-D-glucosyl residues with release of beta-D-glucose.. The protein operates within glycan metabolism; cellulose degradation. Beta-glucosidases are one of a number of cellulolytic enzymes involved in the degradation of cellulosic biomass. Catalyzes the last step releasing glucose from the inhibitory cellobiose. The protein is Probable beta-glucosidase F (bglF) of Neosartorya fischeri (strain ATCC 1020 / DSM 3700 / CBS 544.65 / FGSC A1164 / JCM 1740 / NRRL 181 / WB 181) (Aspergillus fischerianus).